The following is a 169-amino-acid chain: uncharacterized protein (169 aa).

This is an uncharacterized protein from Escherichia coli (strain K12).